A 46-amino-acid polypeptide reads, in one-letter code: Bottromycin D (46 aa).

Positions methionine 10–valine 46 are excised as a propeptide.

Post-translationally, the precursor peptide is first ribosomally synthesized and then highly tailored by specific enzymes to yield the final natural product. These modifications include several methylations, cyclization and the formation of t-Leu and Thia-beta-Ala residues.

The protein resides in the secreted. Bottromycin D is a ribosomally synthesized and post-translationally modified peptide (RiPP) that displays antibiotic activity against methicillin-resistant S.aureus (MRSA). The chain is Bottromycin D from Streptomyces sp.